The chain runs to 1908 residues: Putative ankyrin repeat protein L484 (1908 aa).

ANK repeat units lie at residues 20–50 (DIME…KFNI), 60–97 (PNKT…PMDL), 101–130 (DNVW…SIDR), 134–167 (SNNT…DIDK), and 1370–1399 (DGNT…NPFT). Positions 1539-1603 (VQLLNPKLRD…QTNISDLEFK (65 aa)) form a coiled coil.

The protein localises to the virion. The polypeptide is Putative ankyrin repeat protein L484 (Acanthamoeba polyphaga mimivirus (APMV)).